The following is a 358-amino-acid chain: Arginine kinase (358 aa).

Residues 2-84 (SDADLFSKLD…LDEVIKDYHK (83 aa)) form the Phosphagen kinase N-terminal domain. Position 57–61 (57–61 (GVGIY)) interacts with substrate. A Phosphagen kinase C-terminal domain is found at 112–350 (FIVSTRVRVG…EEILKREKEL (239 aa)). ATP-binding positions include 115–119 (STRVR) and H178. E218 contributes to the substrate binding site. R222 is an ATP binding site. Position 265 (C265) interacts with substrate. ATP is bound by residues 274–278 (RASVH) and 303–308 (RGIHGE). E308 is a binding site for substrate.

Belongs to the ATP:guanido phosphotransferase family.

The enzyme catalyses L-arginine + ATP = N(omega)-phospho-L-arginine + ADP + H(+). The chain is Arginine kinase from Turbo cornutus (Horned turban).